The chain runs to 736 residues: Microtubule-associated protein mu-2 (736 aa).

Belongs to the orthoreovirus mu-2 protein family. In terms of assembly, interacts with protein mu-NS; in viral inclusions. Interacts with polymerase lambda-3; this interaction stimulates the ATPase activity of mu-2. The cofactor is a divalent metal cation.

The protein resides in the virion. The protein localises to the host cytoplasm. It localises to the host cytoskeleton. Functionally, minor inner capsid (core) component. Displays NTPase and RNA 5'-triphosphatase (RTPase) activities. ATP is the preferred substrate for hydrolysis. May function as a cofactor of polymerase lambda-3. Associates with microtubules and plays a role in the formation, structural organization and morphology of viral inclusions, where the assembly of cores and the replication of viral RNA occur. Together with mu-NS, recruits the other core proteins to these inclusions. This is Microtubule-associated protein mu-2 (M1) from Mammalia (T3D).